The following is a 656-amino-acid chain: MQKSLITTPIYYVNDIPHIGHAYTTLIADTLKKYYTLQGEEVFFLTGTDEHGQKIEQSARLRNQSPKAYADSISAIFKNQWDFFNLDYDGFIRTTDSEHQKCVQNAFEIMFEKGDIYKGTYSGYYCVSCESYCAVSKVDNTDSKVLCPDCLRETTLLEEESYFFKLSAYEKPLLEFYAKNPEAILPIYRKNEVTSFIEQGLLDLSITRTSFEWGIPLPKKMNDPKHVVYVWLDALLNYASALGYLNGLDNKMAHFERARHIVGKDILRFHAIYWPAFLMSLNLPLFKQLCVHGWWTIEGVKMSKSLGNVLDAQKLAMEYGIEELRYFLLREVPFGQDGDFSKKALVERINANLNNDLGNLLNRLLGMAKKYFNYSLKSTKITAYYPKELEKAHQILDNANSFVPKMQLHKALEELFNIYDFLNKLIAKEEPWVLHKNNESEKLEALLSLIANTLLQSSFLLYAFMPKSAMKLASAFRVEITPNNYERFFKAKKLQDMVLQDTEPLFSKIEKIEKIEKIEKIEKIEKGEEALAEKAEKKEKEKAPPTQENYISIEDFKKVEIKVGLIKEAQRIEKSNKLLRLKVDLGENRLRQIISGIALDYEPESLVGQMVCVVANLKPAKLMGEMSEGMILAVRDNDNLALISPTREKIAGSLIS.

The 'HIGH' region signature appears at 11–21; it reads YYVNDIPHIGH. The Zn(2+) site is built by Cys126, Cys129, Cys147, and Cys150. The 'KMSKS' region signature appears at 301-305; the sequence is KMSKS. Lys304 contacts ATP. The 102-residue stretch at 555–656 folds into the tRNA-binding domain; sequence DFKKVEIKVG…REKIAGSLIS (102 aa).

The protein belongs to the class-I aminoacyl-tRNA synthetase family. MetG type 2A subfamily. Homodimer. Zn(2+) is required as a cofactor.

Its subcellular location is the cytoplasm. The enzyme catalyses tRNA(Met) + L-methionine + ATP = L-methionyl-tRNA(Met) + AMP + diphosphate. Is required not only for elongation of protein synthesis but also for the initiation of all mRNA translation through initiator tRNA(fMet) aminoacylation. This is Methionine--tRNA ligase (metG) from Helicobacter pylori (strain J99 / ATCC 700824) (Campylobacter pylori J99).